The following is a 175-amino-acid chain: Crossover junction endodeoxyribonuclease RuvC (175 aa).

Active-site residues include aspartate 11, glutamate 71, and histidine 143. Mg(2+) is bound by residues aspartate 11, glutamate 71, and histidine 143.

Belongs to the RuvC family. As to quaternary structure, homodimer which binds Holliday junction (HJ) DNA. The HJ becomes 2-fold symmetrical on binding to RuvC with unstacked arms; it has a different conformation from HJ DNA in complex with RuvA. In the full resolvosome a probable DNA-RuvA(4)-RuvB(12)-RuvC(2) complex forms which resolves the HJ. It depends on Mg(2+) as a cofactor.

It localises to the cytoplasm. The catalysed reaction is Endonucleolytic cleavage at a junction such as a reciprocal single-stranded crossover between two homologous DNA duplexes (Holliday junction).. The RuvA-RuvB-RuvC complex processes Holliday junction (HJ) DNA during genetic recombination and DNA repair. Endonuclease that resolves HJ intermediates. Cleaves cruciform DNA by making single-stranded nicks across the HJ at symmetrical positions within the homologous arms, yielding a 5'-phosphate and a 3'-hydroxyl group; requires a central core of homology in the junction. The consensus cleavage sequence is 5'-(A/T)TT(C/G)-3'. Cleavage occurs on the 3'-side of the TT dinucleotide at the point of strand exchange. HJ branch migration catalyzed by RuvA-RuvB allows RuvC to scan DNA until it finds its consensus sequence, where it cleaves and resolves the cruciform DNA. The polypeptide is Crossover junction endodeoxyribonuclease RuvC (Parvibaculum lavamentivorans (strain DS-1 / DSM 13023 / NCIMB 13966)).